Here is a 346-residue protein sequence, read N- to C-terminus: Fructose-1,6-bisphosphatase class 1 (346 aa).

Mg(2+)-binding residues include Glu96, Asp119, Leu121, and Asp122. Residues 122-125, Asn214, Tyr247, and Lys277 contribute to the substrate site; that span reads DGSS. A Mg(2+)-binding site is contributed by Glu283.

The protein belongs to the FBPase class 1 family. As to quaternary structure, homotetramer. Mg(2+) is required as a cofactor.

The protein localises to the cytoplasm. The enzyme catalyses beta-D-fructose 1,6-bisphosphate + H2O = beta-D-fructose 6-phosphate + phosphate. Its pathway is carbohydrate biosynthesis; gluconeogenesis. The sequence is that of Fructose-1,6-bisphosphatase class 1 from Cytophaga hutchinsonii (strain ATCC 33406 / DSM 1761 / CIP 103989 / NBRC 15051 / NCIMB 9469 / D465).